The following is a 249-amino-acid chain: General transcription factor IIF subunit 2 (249 aa).

A2 carries the N-acetylalanine modification. N6-acetyllysine is present on residues K22, K33, and K137. At S142 the chain carries Phosphoserine. Residues G227 and H229 each coordinate DNA. The residue at position 248 (S248) is a Phosphoserine.

The protein belongs to the TFIIF beta subunit family. In terms of assembly, heterodimer of an alpha and a beta subunit. Interacts with HTATSF1 and GPBP1. Interacts with URI1. Interacts with GTF2B (via N-terminus); this interaction is inhibited in presence of GTF2F1. Part of TBP-based Pol II pre-initiation complex (PIC), in which Pol II core assembles with general transcription factors and other specific initiation factors including GTF2E1, GTF2E2, GTF2F1, GTF2F2, TCEA1, ERCC2, ERCC3, GTF2H2, GTF2H3, GTF2H4, GTF2H5, GTF2A1, GTF2A2, GTF2B and TBP; this large multi-subunit PIC complex mediates DNA unwinding and targets Pol II core to the transcription start site where the first phosphodiester bond forms.

It localises to the nucleus. TFIIF is a general transcription initiation factor that binds to RNA polymerase II and helps to recruit it to the initiation complex in collaboration with TFIIB. This is General transcription factor IIF subunit 2 (GTF2F2) from Bos taurus (Bovine).